Consider the following 640-residue polypeptide: Endoglucanase 2 (640 aa).

An N-terminal signal peptide occupies residues 1–34; it reads MARGGGAAGVSMAHHLGIALVVLVFAAMAQVARG. The active-site Nucleophile is the aspartate 93. Residues histidine 428, aspartate 480, and glutamate 489 contribute to the active site. Positions 512–640 are cleaved as a propeptide — removed in mature form; the sequence is RARGRLGQSL…DVWVTGYKLV (129 aa). A glycan (N-linked (GlcNAc...) asparagine) is linked at asparagine 528.

The protein belongs to the glycosyl hydrolase 9 (cellulase E) family. Expressed in roots and flowers.

The protein localises to the secreted. It catalyses the reaction Endohydrolysis of (1-&gt;4)-beta-D-glucosidic linkages in cellulose, lichenin and cereal beta-D-glucans.. Functionally, hydrolyzes 1,4-beta-glycosyl linkages of 1,4-beta-glucans and 1,3-1,4-beta-glucans. Possesses broad substrate specificity for hemicelluloses of type II cell walls. Substrate preference is carboxymethyl-cellulose &gt; 1,3-1,4-beta-glucan &gt; lichenan &gt; arabinoxylan &gt; phospho-swollen cellulose &gt; xylan &gt; glucomannan. May participate in lateral root development. The polypeptide is Endoglucanase 2 (GLU5) (Oryza sativa subsp. japonica (Rice)).